The following is an 88-amino-acid chain: Actobindin (88 aa).

Position 1 is an N-acetylmethionine (M1). Residues 1–22 are disordered; sequence MNPELQSAIGQGAALKHAETVD. Residue K35 is modified to N6,N6,N6-trimethyllysine. The region spanning 37–54 is the WH2 domain; it reads DRSSFLEEVAKPHELKHA. K72 carries the N6,N6,N6-trimethyllysine modification.

Monomer.

Its function is as follows. Is able to bind two actin monomers at high concentrations of G-actin. The polypeptide is Actobindin (Acanthamoeba castellanii (Amoeba)).